Reading from the N-terminus, the 160-residue chain is MCRFLISTPFSRRRGERKAEAGRMARSVSYVSAAKLLAMARSNPRVAIIDVRDEERSYQAHIGGSHHFSSRSFAARLPELARATGDKDTVVFHCALSKVRGPSCAKMFSDYLSETKEESGTKNIMVLERGFNGWELSGQPVCRCTDAPCKGTCSPEEPEL.

A Rhodanese domain is found at 42–143 (SNPRVAIIDV…WELSGQPVCR (102 aa)). Cys-94 (cysteine persulfide intermediate) is an active-site residue.

The catalysed reaction is [glutaredoxin]-dithiol + arsenate + glutathione + H(+) = glutathionyl-S-S-[glutaredoxin] + arsenite + H2O. In terms of biological role, possesses arsenate reductase activity in vitro. Catalyzes the reduction of arsenate [As(V)] to arsenite [As(III)]. May play a role in arsenic retention in roots. Possesses phosphatase activity towards p-nitrophenyl phosphate in vitro. This is Arsenate reductase 2.1 (ACR2.1) from Oryza sativa subsp. japonica (Rice).